The primary structure comprises 130 residues: Histone H2A type 1-F (130 aa).

The interval 1-22 (MSGRGKQGGKARAKAKTRSSRA) is disordered. S2 is modified (phosphoserine; by RPS6KA5). The residue at position 4 (R4) is a Citrulline; alternate. R4 bears the Symmetric dimethylarginine; by PRMT5; alternate mark. Position 6 is an N6-(2-hydroxyisobutyryl)lysine; alternate (K6). K6 bears the N6-(beta-hydroxybutyryl)lysine; alternate mark. The span at 7–19 (QGGKARAKAKTRS) shows a compositional bias: basic residues. At K10 the chain carries N6-(2-hydroxyisobutyryl)lysine. Residue K10 is modified to N6-lactoyllysine; alternate. At K37 the chain carries N6-(2-hydroxyisobutyryl)lysine; alternate. Residue K37 is modified to N6-(beta-hydroxybutyryl)lysine; alternate. K37 is modified (N6-crotonyllysine; alternate). An N6-(2-hydroxyisobutyryl)lysine mark is found at K75, K76, and K96. Residue K96 is modified to N6-glutaryllysine; alternate. At Q105 the chain carries N5-methylglutamine. The residue at position 119 (K119) is an N6-(2-hydroxyisobutyryl)lysine; alternate. Residues K119 and K120 each carry the N6-crotonyllysine; alternate modification. N6-glutaryllysine; alternate is present on residues K119 and K120. An N6-(beta-hydroxybutyryl)lysine; alternate modification is found at K120. K120 is covalently cross-linked (Glycyl lysine isopeptide (Lys-Gly) (interchain with G-Cter in ubiquitin); alternate). A Phosphothreonine; by DCAF1 modification is found at T121. N6-(beta-hydroxybutyryl)lysine; alternate is present on K126. N6-crotonyllysine; alternate is present on K126. N6-glutaryllysine; alternate is present on K126.

It belongs to the histone H2A family. In terms of assembly, the nucleosome is a histone octamer containing two molecules each of H2A, H2B, H3 and H4 assembled in one H3-H4 heterotetramer and two H2A-H2B heterodimers. The octamer wraps approximately 147 bp of DNA. Post-translationally, deiminated on Arg-4 in granulocytes upon calcium entry. Monoubiquitination of Lys-120 (H2AK119Ub) by RING1, TRIM37 and RNF2/RING2 complex gives a specific tag for epigenetic transcriptional repression and participates in X chromosome inactivation of female mammals. It is involved in the initiation of both imprinted and random X inactivation. Ubiquitinated H2A is enriched in inactive X chromosome chromatin. Ubiquitination of H2A functions downstream of methylation of 'Lys-27' of histone H3 (H3K27me). H2AK119Ub by RNF2/RING2 can also be induced by ultraviolet and may be involved in DNA repair. Following DNA double-strand breaks (DSBs), it is ubiquitinated through 'Lys-63' linkage of ubiquitin moieties by the E2 ligase UBE2N and the E3 ligases RNF8 and RNF168, leading to the recruitment of repair proteins to sites of DNA damage. Ubiquitination at Lys-14 and Lys-16 (H2AK13Ub and H2AK15Ub, respectively) in response to DNA damage is initiated by RNF168 that mediates monoubiquitination at these 2 sites, and 'Lys-63'-linked ubiquitin are then conjugated to monoubiquitin; RNF8 is able to extend 'Lys-63'-linked ubiquitin chains in vitro. H2AK119Ub and ionizing radiation-induced 'Lys-63'-linked ubiquitination (H2AK13Ub and H2AK15Ub) are distinct events. In terms of processing, phosphorylation on Ser-2 (H2AS1ph) is enhanced during mitosis. Phosphorylation on Ser-2 by RPS6KA5/MSK1 directly represses transcription. Acetylation of H3 inhibits Ser-2 phosphorylation by RPS6KA5/MSK1. Phosphorylation at Thr-121 (H2AT120ph) by DCAF1 is present in the regulatory region of many tumor suppresor genes and down-regulates their transcription. Post-translationally, symmetric dimethylation on Arg-4 by the PRDM1/PRMT5 complex may play a crucial role in the germ-cell lineage. Glutamine methylation at Gln-105 (H2AQ104me) by FBL is specifically dedicated to polymerase I. It is present at 35S ribosomal DNA locus and impairs binding of the FACT complex. In terms of processing, crotonylation (Kcr) is specifically present in male germ cells and marks testis-specific genes in post-meiotic cells, including X-linked genes that escape sex chromosome inactivation in haploid cells. Crotonylation marks active promoters and enhancers and confers resistance to transcriptional repressors. It is also associated with post-meiotically activated genes on autosomes. Post-translationally, hydroxybutyrylation of histones is induced by starvation. Lactylated in macrophages by EP300/P300 by using lactoyl-CoA directly derived from endogenous or exogenous lactate, leading to stimulates gene transcription.

It is found in the nucleus. The protein resides in the chromosome. Functionally, core component of nucleosome. Nucleosomes wrap and compact DNA into chromatin, limiting DNA accessibility to the cellular machineries which require DNA as a template. Histones thereby play a central role in transcription regulation, DNA repair, DNA replication and chromosomal stability. DNA accessibility is regulated via a complex set of post-translational modifications of histones, also called histone code, and nucleosome remodeling. The polypeptide is Histone H2A type 1-F (Hist1h2af) (Mus musculus (Mouse)).